The sequence spans 276 residues: Rhomboid protease GlpG (276 aa).

The next 6 membrane-spanning stretches (helical) occupy residues 94–114, 142–162, 169–189, 192–212, 229–249, and 250–270; these read GPVTWIVMLACVVVYIAMSLI, IFMHFSLMHILFNLLWWWYLG, LGSGKLIVITVISALLSGYVQ, FSGPWFGGLSGVVYALMGYVW, LIIFALLWIVASWFDWFGMSM, and ANGAHIAGLIVGLAMAFVDTL. Ser201 (nucleophile) is an active-site residue. The active site involves His254.

This sequence belongs to the peptidase S54 family.

The protein localises to the cell inner membrane. It carries out the reaction Cleaves type-1 transmembrane domains using a catalytic dyad composed of serine and histidine that are contributed by different transmembrane domains.. Rhomboid-type serine protease that catalyzes intramembrane proteolysis. This chain is Rhomboid protease GlpG, found in Salmonella paratyphi A (strain ATCC 9150 / SARB42).